We begin with the raw amino-acid sequence, 123 residues long: Large ribosomal subunit protein bL12 (123 aa).

It belongs to the bacterial ribosomal protein bL12 family. Homodimer. Part of the ribosomal stalk of the 50S ribosomal subunit. Forms a multimeric L10(L12)X complex, where L10 forms an elongated spine to which 2 to 4 L12 dimers bind in a sequential fashion. Binds GTP-bound translation factors.

Functionally, forms part of the ribosomal stalk which helps the ribosome interact with GTP-bound translation factors. Is thus essential for accurate translation. The polypeptide is Large ribosomal subunit protein bL12 (Wigglesworthia glossinidia brevipalpis).